A 64-amino-acid chain; its full sequence is PYLa/PGLa A (64 aa).

An N-terminal signal peptide occupies residues 1-20; it reads MYKQIFLCLIIAALCATIMA. Residues 21–35 constitute a propeptide that is removed on maturation; sequence EASAFADADEDDDKR. The residue at position 59 (leucine 59) is a Leucine amide. Positions 60–64 are excised as a propeptide; sequence GRRDS.

This sequence belongs to the gastrin/cholecystokinin family. Magainin subfamily. As to expression, expressed by the skin glands. Synthesized in the stomach and stored in a novel granular multinucleated cell in the gastric mucosa. Stored as active, processed peptides in large granules within the granular gland secretions of the skin.

It localises to the secreted. In terms of biological role, PGLa and PGLa-H display a broad-spectrum of antibacterial activity against a range of Gram-positive and Gram-negative bacteria. PGLa also displays antifungal activity against C.albicans ATCC 14053. PGLa-H shows moderate antibacterial activity against the multidrug-resistant methicillin-resistant S.aureus (MRSA) but exhibits very little hemolytic activity. The sequence is that of PYLa/PGLa A (pgla-a) from Xenopus laevis (African clawed frog).